Here is a 68-residue protein sequence, read N- to C-terminus: Large ribosomal subunit protein uL30 (68 aa).

The tract at residues 1–26 is disordered; that stretch reads MSAKKSASKATVTVQQIGSPLRREPS. Polar residues predominate over residues 8-18; the sequence is SKATVTVQQIG.

The protein belongs to the universal ribosomal protein uL30 family. Part of the 50S ribosomal subunit.

The polypeptide is Large ribosomal subunit protein uL30 (Parvibaculum lavamentivorans (strain DS-1 / DSM 13023 / NCIMB 13966)).